The following is a 1706-amino-acid chain: Bifunctional hemolysin/adenylate cyclase (1706 aa).

The a, catalytic stretch occupies residues 1–399; the sequence is MQQSHQAGYA…RRPSLGAVER (399 aa). 349-356 lines the ATP pocket; the sequence is AYGVAGKS. Residues 367-405 are disordered; that stretch reads GVPGGRSKSSPDVLETVPASPGLRRPSLGAVERQDSGYD. The segment at 400–912 is b, Ala/Gly-rich; it reads QDSGYDSLDG…LKHSIKLEVI (513 aa). The required for interaction with CyaC stretch occupies residues 500–698; sequence LSAAVFGLGE…SVVGAPVAVV (199 aa). Residues Lys860 and Lys983 are each lipidated (N6-palmitoyl lysine). Residues 913-1656 form a c region; that stretch reads GGDGDDVVLA…RDADHRVEAI (744 aa). 17 Hemolysin-type calcium-binding repeats span residues 1014–1031, 1032–1049, 1050–1067, 1155–1172, 1173–1190, 1279–1296, 1297–1314, 1315–1332, 1335–1352, 1411–1428, 1429–1446, 1447–1464, 1468–1484, 1537–1554, 1555–1572, 1573–1590, and 1603–1620; these read IGGA…DNFL, AGGA…NDTL, VGGE…DDVF, WGDD…DDIL, RGGL…NDIF, MGQG…DDLL, FGGD…NDTL, YGGL…NDWF, TPAR…VDTV, TGDA…ADVL, AGGE…DDQL, SGDA…DDWF, AANA…NDTV, IGDA…NDVL, SGGA…SDLL, SGDA…DDTY, and ESGG…ADQL. The tract at residues 1657 to 1706 is d, Asp/Gly-rich; it reads HAANQAIDPAGIEKLVEAMAQYPDPGAAAAAPPAARVPDTLMQSLAVNWR.

It in the N-terminal section; belongs to the adenylyl cyclase class-2 family. This sequence in the C-terminal section; belongs to the RTX prokaryotic toxin family. In terms of processing, released in a processed form. Post-translationally, palmitoylated at Lys-860 and Lys-983 by CyaC. The toxin only becomes active when modified in position Lys-983: palmitoylation is required for efficient membrane insertion and pore formation of the acylated Hemolysin chain.

It is found in the secreted. It localises to the host cell membrane. The enzyme catalyses ATP = 3',5'-cyclic AMP + diphosphate. With respect to regulation, activated by host calmodulin. In terms of biological role, bifunctional adenylate cyclase toxin-hemolysin that plays a crucial role in host colonization. It causes whooping cough by acting on mammalian cells by elevating cAMP-concentration and thus disrupts normal cell function. Adenylate cyclase that is activated by host intracellular calmodulin and catalyzes un-regulated conversion of ATP to cAMP, thereby impairing microbicidal functions of immune effector cells and inducing apoptosis of lung macrophages. Its function is as follows. Hemolysin that forms small cation-selective membrane channels, leading to hemolytic activity. The hemolytic activity of CyaA is weak compared with that of the HlyA of E.coli. This chain is Bifunctional hemolysin/adenylate cyclase (cya), found in Bordetella bronchiseptica (strain ATCC BAA-588 / NCTC 13252 / RB50) (Alcaligenes bronchisepticus).